The primary structure comprises 343 residues: MKALVKTQHGTGHFAVQEKPEPTPGKHQVKIKVKYTGVCGSDIHTYEGHYPVAAPVTLGHEFSGEIVELGEGVTGFNVGDRVTSETTYSICGKCSYCTSGDYNLCSHRKGLGNQQDGSFAKYVIARQESLHHLPAGVDDRSAAMTEPLACTHHAIAKTSINKGDLVVVTGPGPIGLLAAQVAKSHGGTVIITGLSNDQVRLKKAKEVGIDYAIDTQEVDIKELVSELTDGYGADVVLECSGAVPAAKQGIDLLRKKGQYAQVGLFAQPEIQFNFEKIIQKEISVVGSRSQKPADWEPALSLLNEKKVNAKTLVTHEYTISEWDKAYHAIKSGEAIKVLLTPID.

The segment at 1-26 is disordered; that stretch reads MKALVKTQHGTGHFAVQEKPEPTPGK. Residues Cys39, His60, and Glu61 each contribute to the Zn(2+) site. Position 146 (Glu146) interacts with substrate. NAD(+) contacts are provided by residues Ile174, Arg200, and 262-264; that span reads VGL.

The protein belongs to the zinc-containing alcohol dehydrogenase family. Homotetramer. Zn(2+) is required as a cofactor.

It catalyses the reaction keto-D-fructose + NADH + H(+) = D-sorbitol + NAD(+). It carries out the reaction xylitol + NAD(+) = D-xylulose + NADH + H(+). The enzyme catalyses L-iditol + NAD(+) = keto-L-sorbose + NADH + H(+). Its function is as follows. Polyol dehydrogenase that catalyzes the NAD(+)-dependent oxidation of various sugar alcohols. Is active with D-sorbitol (D-glucitol), xylitol and L-iditol as substrates, leading to the C2-oxidized products D-fructose, D-xylulose and L-sorbose, respectively. This chain is Sorbitol dehydrogenase (gutB), found in Halalkalibacterium halodurans (strain ATCC BAA-125 / DSM 18197 / FERM 7344 / JCM 9153 / C-125) (Bacillus halodurans).